The sequence spans 348 residues: Delta(6)-protoilludene synthase 18 (348 aa).

Mg(2+) is bound by residues D87, N223, S227, and E231. The DDXXD motif signature appears at 87 to 91 (DEYTD). Residues 223–231 (NDLVSYNRE) carry the NSE/DTE motif motif. (2E,6E)-farnesyl diphosphate is bound by residues R311 and Y312.

The protein belongs to the terpene synthase family. Requires Mg(2+) as cofactor.

It carries out the reaction (2E,6E)-farnesyl diphosphate = Delta(6)-protoilludene + diphosphate. Functionally, terpene cyclase that catalyzes the cyclization of farnesyl diphosphate (FPP) to delta(6)-protoilludene. The protein is Delta(6)-protoilludene synthase 18 of Postia placenta (strain ATCC 44394 / Madison 698-R) (Brown rot fungus).